Here is a 502-residue protein sequence, read N- to C-terminus: Cysteine--tRNA ligase (502 aa).

Residue Cys30 participates in Zn(2+) binding. Residues 32 to 42 (PTIYDYAHIGN) carry the 'HIGH' region motif. Positions 224, 263, and 267 each coordinate Zn(2+). The 'KMSKS' region motif lies at 296–300 (KMSKS). ATP is bound at residue Lys299.

Belongs to the class-I aminoacyl-tRNA synthetase family. In terms of assembly, monomer. Zn(2+) serves as cofactor.

The protein resides in the cytoplasm. It catalyses the reaction tRNA(Cys) + L-cysteine + ATP = L-cysteinyl-tRNA(Cys) + AMP + diphosphate. The polypeptide is Cysteine--tRNA ligase (Bartonella quintana (strain Toulouse) (Rochalimaea quintana)).